The following is a 59-amino-acid chain: uncharacterized protein (59 aa).

An N-terminal signal peptide occupies residues 1–21 (MYLFYVLLSSLFLSALIYVIG). The Extracellular portion of the chain corresponds to 22 to 24 (KSH). The chain crosses the membrane as a helical span at residues 25–45 (PNLFMFISLFVNVVTILYLVF). Topologically, residues 46–59 (KDYGQYIIAKPINT) are cytoplasmic.

The protein resides in the host membrane. This is an uncharacterized protein from Acidianus convivator (ABV).